We begin with the raw amino-acid sequence, 184 residues long: Succinate dehydrogenase cytochrome b560 subunit, mitochondrial (184 aa).

A helical membrane pass occupies residues 65–94 (LTWMLSGFHRISGCVMAGTLLVGGLGFAVL). Over 95–114 (PLDFTTFVEYIRGWNLPCAV) the chain is Mitochondrial intermembrane. A helical membrane pass occupies residues 115 to 139 (TAVFKYIIAFPIIFHTLNGIRFLGF). Histidine 129 provides a ligand contact to heme. Over 140-147 (DLAKGVDN) the chain is Mitochondrial matrix. A helical membrane pass occupies residues 148-169 (IGQVYKSGWLVFGVSAVIALAI). Residues 170-172 (VIN) lie on the Mitochondrial intermembrane side of the membrane.

This sequence belongs to the cytochrome b560 family. As to quaternary structure, component of complex II composed of four subunits: a flavoprotein (FP), iron-sulfur protein (IP), and a cytochrome b560 composed of two transmembrane proteins. Requires heme as cofactor.

Its subcellular location is the mitochondrion inner membrane. It participates in carbohydrate metabolism; tricarboxylic acid cycle. In terms of biological role, membrane-anchoring subunit of succinate dehydrogenase (SDH) that is involved in complex II of the mitochondrial electron transport chain and is responsible for transferring electrons from succinate to ubiquinone (coenzyme Q). Mediates resistance to enteropathogenic E.coli infection. This is Succinate dehydrogenase cytochrome b560 subunit, mitochondrial (mev-1) from Caenorhabditis briggsae.